The following is a 315-amino-acid chain: Mannose-6-phosphate isomerase ManA (315 aa).

The Zn(2+) site is built by His-97, Glu-115, and His-172. Arg-192 is a catalytic residue.

It belongs to the mannose-6-phosphate isomerase type 1 family. The cofactor is Zn(2+).

It catalyses the reaction D-mannose 6-phosphate = D-fructose 6-phosphate. This Bacillus subtilis (strain 168) protein is Mannose-6-phosphate isomerase ManA (manA).